Here is an 860-residue protein sequence, read N- to C-terminus: DNA mismatch repair protein MutS (860 aa).

Residue 621–628 participates in ATP binding; it reads GPNMGGKS.

The protein belongs to the DNA mismatch repair MutS family.

In terms of biological role, this protein is involved in the repair of mismatches in DNA. It is possible that it carries out the mismatch recognition step. This protein has a weak ATPase activity. The polypeptide is DNA mismatch repair protein MutS (Salmonella arizonae (strain ATCC BAA-731 / CDC346-86 / RSK2980)).